The sequence spans 191 residues: Glutathione-dependent formaldehyde-activating enzyme (191 aa).

Positions 22–169 constitute a CENP-V/GFA domain; it reads FAGGTLQCLC…LTELGLTPYD (148 aa). Zn(2+) is bound by residues C29, C31, C50, C52, C55, C97, and C100.

Belongs to the Gfa family. Zn(2+) serves as cofactor.

The catalysed reaction is S-(hydroxymethyl)glutathione = glutathione + formaldehyde. It functions in the pathway one-carbon metabolism; formaldehyde degradation; formate from formaldehyde (glutathione route): step 1/3. Functionally, catalyzes the condensation of formaldehyde and glutathione to S-hydroxymethylglutathione. The sequence is that of Glutathione-dependent formaldehyde-activating enzyme from Xanthomonas campestris pv. campestris (strain B100).